We begin with the raw amino-acid sequence, 402 residues long: Cholinephosphotransferase 1 (402 aa).

Residues 1-62 (MGLAEGLAAR…LVEKVPLWLA (62 aa)) are Cytoplasmic-facing. A helical transmembrane segment spans residues 63-83 (PNTITMVGLLLNVLSTLILVC). Position 64 (Asn64) interacts with CDP-choline. The Lumenal segment spans residues 84-93 (YCPTATEGAP). The chain crosses the membrane as a helical span at residues 94-118 (FWTYLLCAIGLFVYQSLDAIDGKQA). Mg(2+) is bound by residues Asp111 and Asp114. Arg119 serves as a coordination point for CDP-choline. At 119–125 (RRTNSSS) the chain is on the cytoplasmic side. A helical transmembrane segment spans residues 126–150 (PLGEMFDHGCDSISIVFVNLGTIAA). Position 132 (Asp132) interacts with Mg(2+). His133 acts as the Proton acceptor in catalysis. Asp136 contacts Mg(2+). Residues 151–160 (VRLGTLPGWM) are Lumenal-facing. The helical transmembrane segment at 161–179 (FYCCFVGMFMFYCAQWQTY) threads the bilayer. Topologically, residues 180 to 190 (VCGTLKFGIID) are cytoplasmic. A helical transmembrane segment spans residues 191–207 (VTELQISVTVMFLMTAV). Over 208 to 222 (CGPELWDYEIPFTGL) the chain is Lumenal. A helical membrane pass occupies residues 223 to 248 (PMKTIPLLGIIGGTVYSCSNYFRVIL). The Cytoplasmic segment spans residues 249–265 (SGGVGKNGSTVAGTSVL). A helical membrane pass occupies residues 266–281 (SPGLHIGLVLLLALMI). At 282–293 (YKKSTTNLFLQN) the chain is on the lumenal side. A helical transmembrane segment spans residues 294-316 (PCLYTLAFGFVSAKITIKLVIAH). Residues 317 to 329 (MTKSEISLQDTAF) lie on the Cytoplasmic side of the membrane. A helical transmembrane segment spans residues 330-339 (IGPGLLFFNQ). The Lumenal portion of the chain corresponds to 340-346 (YFNSFID). The chain crosses the membrane as a helical span at residues 347–376 (EYIVLWIAMVISFADLLRYCISVCLQIATH). The Cytoplasmic segment spans residues 377–402 (LRISVFRISSNQAAEQVQTQKQKLTD).

This sequence belongs to the CDP-alcohol phosphatidyltransferase class-I family. Homodimer. It depends on Mg(2+) as a cofactor. The cofactor is Mn(2+).

It is found in the golgi apparatus membrane. The catalysed reaction is CDP-choline + a 1,2-diacyl-sn-glycerol = a 1,2-diacyl-sn-glycero-3-phosphocholine + CMP + H(+). The enzyme catalyses 1,2-dioctanoyl-sn-glycerol + CDP-choline = 1,2-dioctanoyl-sn-glycero-3-phosphocholine + CMP + H(+). It catalyses the reaction 1-octadecanoyl-2-(5Z,8Z,11Z,14Z-eicosatetraenoyl)-sn-glycerol + CDP-choline = 1-octadecanoyl-2-(5Z,8Z,11Z,14Z-eicosatetraenoyl)-sn-glycero-3-phosphocholine + CMP + H(+). It carries out the reaction 1-hexadecanoyl-2-(9Z-octadecenoyl)-sn-glycerol + CDP-choline = 1-hexadecanoyl-2-(9Z-octadecenoyl)-sn-glycero-3-phosphocholine + CMP + H(+). The catalysed reaction is 1-hexadecanoyl-2-(4Z,7Z,10Z,13Z,16Z,19Z-docosahexaenoyl)-sn-glycerol + CDP-choline = 1-hexadecanoyl-2-(4Z,7Z,10Z,13Z,16Z,19Z-docosahexaenoyl)-sn-glycero-3-phosphocholine + CMP + H(+). Its pathway is phospholipid metabolism; phosphatidylcholine biosynthesis; phosphatidylcholine from phosphocholine: step 2/2. Catalyzes the final step of de novo phosphatidylcholine (PC) synthesis, i.e. the transfer of choline phosphate from CDP-choline to the free hydroxyl of a diacylglycerol (DAG), producing a PC. It thereby plays a central role in the formation and maintenance of vesicular membranes. Shows a high preference for CDP-choline over CDP-ethanolamine as substrate. This Xenopus laevis (African clawed frog) protein is Cholinephosphotransferase 1 (chpt1).